A 333-amino-acid chain; its full sequence is MIDSRFPLIDLHRHLDGNIRPQTILELGQQYRLALPANELEALRPHVQISDSVPDLVSFLQKLDWGVAVLATLDACRRVAYENVEDLKRAGIDYAELRFSPYYMAQRHGLPLQGVVEAIIDGVSAASRDVGVPVKLIGIMSRTFGQEACRQELEALLSGRERIAALDLAGDELGFPGDLFRSHFTRARDAGWHITVHAGEAAGAESIWQAIRELGAERIGHGVNAIQDARLMDYLAEHAIGVEACLTSNLQTSTVPSLAQHPLKHFLQHGIIANLNTDDPAVEGIELRHEYQTAAPAAGLSAEQIRQAQYNGLSMAFLSPAEKQVLRDAKQMC.

Positions 12 and 14 each coordinate Zn(2+). Residues His-14, Asp-16, and Gly-170 each coordinate substrate. His-197 is a Zn(2+) binding site. The Proton donor role is filled by Glu-200. Asp-278 is a binding site for Zn(2+). Asp-279 is a substrate binding site.

This sequence belongs to the metallo-dependent hydrolases superfamily. Adenosine and AMP deaminases family. Adenosine deaminase subfamily. The cofactor is Zn(2+).

The catalysed reaction is adenosine + H2O + H(+) = inosine + NH4(+). It carries out the reaction 2'-deoxyadenosine + H2O + H(+) = 2'-deoxyinosine + NH4(+). Catalyzes the hydrolytic deamination of adenosine and 2-deoxyadenosine. The sequence is that of Adenosine deaminase from Edwardsiella ictaluri (strain 93-146).